A 309-amino-acid chain; its full sequence is Probable manganese-dependent inorganic pyrophosphatase (309 aa).

Residues His9, Asp13, Asp15, Asp75, His97, and Asp149 each coordinate Mn(2+).

The protein belongs to the PPase class C family. Mn(2+) is required as a cofactor.

The protein resides in the cytoplasm. It carries out the reaction diphosphate + H2O = 2 phosphate + H(+). The sequence is that of Probable manganese-dependent inorganic pyrophosphatase from Bacillus cereus (strain 03BB102).